Consider the following 107-residue polypeptide: Large ribosomal subunit protein P2 (107 aa).

Low complexity predominate over residues 63–83 (SSVPSGGSAPAAAAPSGGAAP). Residues 63-107 (SSVPSGGSAPAAAAPSGGAAPKAEEKKKEEPKEESDDDMGFGLFD) are disordered. Positions 84–93 (KAEEKKKEEP) are enriched in basic and acidic residues.

It belongs to the eukaryotic ribosomal protein P1/P2 family. P1 and P2 exist as dimers at the large ribosomal subunit. In terms of processing, phosphorylated.

Functionally, plays an important role in the elongation step of protein synthesis. The sequence is that of Large ribosomal subunit protein P2 from Caenorhabditis elegans.